The sequence spans 58 residues: MSESETEQTGEHASHRTGQTHECRRCGRNQGLVGKYDIYLCRQCFREVARDMGFKKYR.

Residues 1-21 form a disordered region; it reads MSESETEQTGEHASHRTGQTH. The span at 9–21 shows a compositional bias: basic and acidic residues; sequence TGEHASHRTGQTH. The Zn(2+) site is built by cysteine 23, cysteine 26, cysteine 41, and cysteine 44.

It belongs to the universal ribosomal protein uS14 family. Zinc-binding uS14 subfamily. In terms of assembly, part of the 30S ribosomal subunit. Zn(2+) is required as a cofactor.

In terms of biological role, binds 16S rRNA, required for the assembly of 30S particles. In Haloquadratum walsbyi (strain DSM 16790 / HBSQ001), this protein is Small ribosomal subunit protein uS14.